The primary structure comprises 499 residues: Interferon regulatory factor 5 (499 aa).

A Nuclear localization signal motif is present at residues 12-18 (PRRVRLK). The segment at residues 14-122 (RVRLKPWLVA…QPYKVYEVCS (109 aa)) is a DNA-binding region (IRF tryptophan pentad repeat). Residues 121–142 (CSNGPAPAESQPSEDNAEEEEE) form a disordered region. The short motif at 145 to 155 (LQKMLPGLSIT) is the Nuclear export signal element. Residues serine 153 and serine 294 each carry the phosphoserine; by TBK1 modification. A Phosphoserine modification is found at serine 302. Residues lysine 412 and lysine 413 each participate in a glycyl lysine isopeptide (Lys-Gly) (interchain with G-Cter in ubiquitin) cross-link. Serine 432, serine 436, serine 438, serine 441, and serine 447 each carry phosphoserine.

Belongs to the IRF family. In terms of assembly, homodimer, when phosphorylated. Interacts with TASL (via pLxIS motif); interaction takes place downstream of TLR7, TLR8 or TLR9, leading to its activation. Interacts with MYD88 and TRAF6. Post-translationally, phosphorylation of serine and threonine residues by IKBKB in a C-terminal autoinhibitory region, stimulates dimerization, transport into the nucleus, assembly with the coactivator CBP/EP300 and initiation of transcription. In terms of processing, 'Lys-63'-linked polyubiquitination by TRAF6 is required for activation.

The protein localises to the cytoplasm. It localises to the nucleus. Maintained as a monomer in an autoinhibited state. Phosphorylation and activation follow the following steps: innate adapter protein TASL recruits IRF5, thereby licensing IRF5 for phosphorylation by IKBKB. Phosphorylated IRF5 dissociates from the adapter proteins, dimerizes, and then enters the nucleus to induce IFNs. In terms of biological role, transcription factor that plays a critical role in innate immunity by activating expression of type I interferon (IFN) IFNA and INFB and inflammatory cytokines downstream of endolysosomal toll-like receptors TLR7, TLR8 and TLR9. Regulates the transcription of type I IFN genes (IFN-alpha and IFN-beta) and IFN-stimulated genes (ISG) by binding to an interferon-stimulated response element (ISRE) in their promoters. Can efficiently activate both the IFN-beta (IFNB) and the IFN-alpha (IFNA) genes and mediate their induction downstream of the TLR-activated, MyD88-dependent pathway. The protein is Interferon regulatory factor 5 of Bos taurus (Bovine).